Consider the following 118-residue polypeptide: Large ribosomal subunit protein bL20 (118 aa).

This sequence belongs to the bacterial ribosomal protein bL20 family.

Binds directly to 23S ribosomal RNA and is necessary for the in vitro assembly process of the 50S ribosomal subunit. It is not involved in the protein synthesizing functions of that subunit. The protein is Large ribosomal subunit protein bL20 of Aliarcobacter butzleri (strain RM4018) (Arcobacter butzleri).